The following is a 269-amino-acid chain: JmjC domain-containing protein 8 (269 aa).

The signal sequence occupies residues methionine 1 to proline 24. 3 N-linked (GlcNAc...) asparagine glycosylation sites follow: asparagine 135, asparagine 145, and asparagine 214. The JmjC domain maps to aspartate 136 to glycine 269.

Oligomer. Dimer. Interacts with PKM; regulates angiogenesis and metabolism. In terms of processing, N-glycosylated.

It localises to the endoplasmic reticulum lumen. The protein localises to the cytoplasm. Its function is as follows. Functions as a positive regulator of TNF-induced NF-kappaB signaling. Regulates angiogenesis and cellular metabolism through interaction with PKM. In Mus musculus (Mouse), this protein is JmjC domain-containing protein 8.